We begin with the raw amino-acid sequence, 442 residues long: SPRY domain-containing protein 3 (442 aa).

Residues 17–204 (DLNLHYRFLN…VRLHLNAELG (188 aa)) form the B30.2/SPRY domain. The tract at residues 371–394 (EGEEEEEEEEEEEDGEEIEPEHEG) is disordered. The segment covering 372 to 390 (GEEEEEEEEEEEDGEEIEP) has biased composition (acidic residues).

The chain is SPRY domain-containing protein 3 (SPRYD3) from Pongo abelii (Sumatran orangutan).